Reading from the N-terminus, the 118-residue chain is Large ribosomal subunit protein bL20 (118 aa).

It belongs to the bacterial ribosomal protein bL20 family.

Binds directly to 23S ribosomal RNA and is necessary for the in vitro assembly process of the 50S ribosomal subunit. It is not involved in the protein synthesizing functions of that subunit. The sequence is that of Large ribosomal subunit protein bL20 from Edwardsiella ictaluri (strain 93-146).